The sequence spans 164 residues: SsrA-binding protein (164 aa).

The protein belongs to the SmpB family.

Its subcellular location is the cytoplasm. Functionally, required for rescue of stalled ribosomes mediated by trans-translation. Binds to transfer-messenger RNA (tmRNA), required for stable association of tmRNA with ribosomes. tmRNA and SmpB together mimic tRNA shape, replacing the anticodon stem-loop with SmpB. tmRNA is encoded by the ssrA gene; the 2 termini fold to resemble tRNA(Ala) and it encodes a 'tag peptide', a short internal open reading frame. During trans-translation Ala-aminoacylated tmRNA acts like a tRNA, entering the A-site of stalled ribosomes, displacing the stalled mRNA. The ribosome then switches to translate the ORF on the tmRNA; the nascent peptide is terminated with the 'tag peptide' encoded by the tmRNA and targeted for degradation. The ribosome is freed to recommence translation, which seems to be the essential function of trans-translation. The sequence is that of SsrA-binding protein from Corynebacterium efficiens (strain DSM 44549 / YS-314 / AJ 12310 / JCM 11189 / NBRC 100395).